The primary structure comprises 152 residues: Large ribosomal subunit protein uL15 (152 aa).

Residues 1–66 (MRSNPMTLRL…GFEGGQTPMQ (66 aa)) form a disordered region. The segment covering 28-38 (RGIGSGLGKTA) has biased composition (gly residues). The span at 39–52 (GRGHKGSFARKGGG) shows a compositional bias: basic residues.

This sequence belongs to the universal ribosomal protein uL15 family. As to quaternary structure, part of the 50S ribosomal subunit.

Functionally, binds to the 23S rRNA. The polypeptide is Large ribosomal subunit protein uL15 (Xanthomonas oryzae pv. oryzae (strain KACC10331 / KXO85)).